A 1263-amino-acid chain; its full sequence is DNA-directed RNA polymerase subunit beta (1263 aa).

Belongs to the RNA polymerase beta chain family. The RNAP catalytic core consists of 2 alpha, 1 beta, 1 beta' and 1 omega subunit. When a sigma factor is associated with the core the holoenzyme is formed, which can initiate transcription.

It catalyses the reaction RNA(n) + a ribonucleoside 5'-triphosphate = RNA(n+1) + diphosphate. In terms of biological role, DNA-dependent RNA polymerase catalyzes the transcription of DNA into RNA using the four ribonucleoside triphosphates as substrates. The protein is DNA-directed RNA polymerase subunit beta of Thermotoga sp. (strain RQ2).